A 144-amino-acid chain; its full sequence is Universal stress protein A (144 aa).

This sequence belongs to the universal stress protein A family. Homodimer.

The protein localises to the cytoplasm. In terms of biological role, required for resistance to DNA-damaging agents. This Salmonella typhimurium (strain LT2 / SGSC1412 / ATCC 700720) protein is Universal stress protein A (uspA).